We begin with the raw amino-acid sequence, 386 residues long: Chaperone protein DnaJ (386 aa).

Positions 5-69 (DLYDVLGVKK…QKRAQYDQFG (65 aa)) constitute a J domain. The segment at 140–224 (GKETSIKYNR…CHGAGVTEER (85 aa)) adopts a CR-type zinc-finger fold. Zn(2+) contacts are provided by C153, C156, C170, C173, C196, C199, C212, and C215. CXXCXGXG motif repeat units lie at residues 153–160 (CHTCHGSG), 170–177 (CSTCHGQG), 196–203 (CPTCGGKG), and 212–219 (CDTCHGAG).

This sequence belongs to the DnaJ family. As to quaternary structure, homodimer. Zn(2+) serves as cofactor.

The protein resides in the cytoplasm. Participates actively in the response to hyperosmotic and heat shock by preventing the aggregation of stress-denatured proteins and by disaggregating proteins, also in an autonomous, DnaK-independent fashion. Unfolded proteins bind initially to DnaJ; upon interaction with the DnaJ-bound protein, DnaK hydrolyzes its bound ATP, resulting in the formation of a stable complex. GrpE releases ADP from DnaK; ATP binding to DnaK triggers the release of the substrate protein, thus completing the reaction cycle. Several rounds of ATP-dependent interactions between DnaJ, DnaK and GrpE are required for fully efficient folding. Also involved, together with DnaK and GrpE, in the DNA replication of plasmids through activation of initiation proteins. The polypeptide is Chaperone protein DnaJ (Limosilactobacillus fermentum (strain NBRC 3956 / LMG 18251) (Lactobacillus fermentum)).